The sequence spans 403 residues: Ribosomal RNA large subunit methyltransferase I (403 aa).

The 80-residue stretch at 9 to 88 (YPRLVLSKGR…EPVDIAFFTR (80 aa)) folds into the PUA domain.

The protein belongs to the methyltransferase superfamily. RlmI family.

The protein localises to the cytoplasm. It catalyses the reaction cytidine(1962) in 23S rRNA + S-adenosyl-L-methionine = 5-methylcytidine(1962) in 23S rRNA + S-adenosyl-L-homocysteine + H(+). Its function is as follows. Specifically methylates the cytosine at position 1962 (m5C1962) of 23S rRNA. This Salmonella arizonae (strain ATCC BAA-731 / CDC346-86 / RSK2980) protein is Ribosomal RNA large subunit methyltransferase I.